The chain runs to 217 residues: Octanoyltransferase (217 aa).

In terms of domain architecture, BPL/LPL catalytic spans 32–207; sequence DDSADEIWLV…HMIKKLNATQ (176 aa). Substrate-binding positions include 71–78, 138–140, and 151–153; these read RGGQVTYH, SLG, and GLA. C169 functions as the Acyl-thioester intermediate in the catalytic mechanism.

It belongs to the LipB family.

It is found in the cytoplasm. It catalyses the reaction octanoyl-[ACP] + L-lysyl-[protein] = N(6)-octanoyl-L-lysyl-[protein] + holo-[ACP] + H(+). It functions in the pathway protein modification; protein lipoylation via endogenous pathway; protein N(6)-(lipoyl)lysine from octanoyl-[acyl-carrier-protein]: step 1/2. Its function is as follows. Catalyzes the transfer of endogenously produced octanoic acid from octanoyl-acyl-carrier-protein onto the lipoyl domains of lipoate-dependent enzymes. Lipoyl-ACP can also act as a substrate although octanoyl-ACP is likely to be the physiological substrate. In Pseudoalteromonas translucida (strain TAC 125), this protein is Octanoyltransferase.